A 95-amino-acid chain; its full sequence is Co-chaperonin GroES (95 aa).

The protein belongs to the GroES chaperonin family. Heptamer of 7 subunits arranged in a ring. Interacts with the chaperonin GroEL.

Its subcellular location is the cytoplasm. In terms of biological role, together with the chaperonin GroEL, plays an essential role in assisting protein folding. The GroEL-GroES system forms a nano-cage that allows encapsulation of the non-native substrate proteins and provides a physical environment optimized to promote and accelerate protein folding. GroES binds to the apical surface of the GroEL ring, thereby capping the opening of the GroEL channel. This Clostridium acetobutylicum (strain ATCC 824 / DSM 792 / JCM 1419 / IAM 19013 / LMG 5710 / NBRC 13948 / NRRL B-527 / VKM B-1787 / 2291 / W) protein is Co-chaperonin GroES.